The following is a 131-amino-acid chain: uncharacterized protein (131 aa).

4 helical membrane-spanning segments follow: residues 7 to 29 (LLKF…SLLY), 49 to 69 (LVKV…LIAL), 76 to 98 (LILI…LFTY), and 102 to 124 (ELSE…FLYL).

The protein localises to the cell membrane. This is an uncharacterized protein from Aquifex aeolicus (strain VF5).